A 652-amino-acid polypeptide reads, in one-letter code: DNA ligase (652 aa).

NAD(+) contacts are provided by residues 29–33, 78–79, and glutamate 107; these read DSQYD and SL. Lysine 109 serves as the catalytic N6-AMP-lysine intermediate. Positions 130, 164, 278, and 302 each coordinate NAD(+). Residues cysteine 395, cysteine 398, cysteine 413, and cysteine 418 each contribute to the Zn(2+) site. One can recognise a BRCT domain in the interval 577-652; it reads STDAQLSGLT…IQDEDWLLNL (76 aa).

Belongs to the NAD-dependent DNA ligase family. LigA subfamily. Mg(2+) is required as a cofactor. The cofactor is Mn(2+).

It carries out the reaction NAD(+) + (deoxyribonucleotide)n-3'-hydroxyl + 5'-phospho-(deoxyribonucleotide)m = (deoxyribonucleotide)n+m + AMP + beta-nicotinamide D-nucleotide.. Its function is as follows. DNA ligase that catalyzes the formation of phosphodiester linkages between 5'-phosphoryl and 3'-hydroxyl groups in double-stranded DNA using NAD as a coenzyme and as the energy source for the reaction. It is essential for DNA replication and repair of damaged DNA. The protein is DNA ligase of Streptococcus agalactiae serotype V (strain ATCC BAA-611 / 2603 V/R).